Here is a 550-residue protein sequence, read N- to C-terminus: Glucose-6-phosphate isomerase (550 aa).

The active-site Proton donor is Glu-356. Residues His-387 and Lys-515 contribute to the active site.

Belongs to the GPI family.

It is found in the cytoplasm. It carries out the reaction alpha-D-glucose 6-phosphate = beta-D-fructose 6-phosphate. The protein operates within carbohydrate biosynthesis; gluconeogenesis. Its pathway is carbohydrate degradation; glycolysis; D-glyceraldehyde 3-phosphate and glycerone phosphate from D-glucose: step 2/4. Its function is as follows. Catalyzes the reversible isomerization of glucose-6-phosphate to fructose-6-phosphate. This chain is Glucose-6-phosphate isomerase, found in Vibrio parahaemolyticus serotype O3:K6 (strain RIMD 2210633).